A 163-amino-acid polypeptide reads, in one-letter code: Lipoprotein signal peptidase (163 aa).

3 helical membrane passes run 8-28 (FFLL…YWVM), 61-81 (FSHW…LWLW), and 93-113 (FGFT…ICFY). Residues aspartate 117 and aspartate 136 contribute to the active site. A helical transmembrane segment spans residues 128-148 (YFAVFNLADTFITLGVIAIII).

This sequence belongs to the peptidase A8 family.

Its subcellular location is the cell inner membrane. The enzyme catalyses Release of signal peptides from bacterial membrane prolipoproteins. Hydrolyzes -Xaa-Yaa-Zaa-|-(S,diacylglyceryl)Cys-, in which Xaa is hydrophobic (preferably Leu), and Yaa (Ala or Ser) and Zaa (Gly or Ala) have small, neutral side chains.. It functions in the pathway protein modification; lipoprotein biosynthesis (signal peptide cleavage). Its function is as follows. This protein specifically catalyzes the removal of signal peptides from prolipoproteins. This chain is Lipoprotein signal peptidase, found in Bartonella henselae (strain ATCC 49882 / DSM 28221 / CCUG 30454 / Houston 1) (Rochalimaea henselae).